Here is a 262-residue protein sequence, read N- to C-terminus: Methylthioribulose-1-phosphate dehydratase (262 aa).

A substrate-binding site is contributed by Cys-115. Residues His-133 and His-135 each contribute to the Zn(2+) site. Glu-158 acts as the Proton donor/acceptor in catalysis. Zn(2+) is bound at residue His-223.

This sequence belongs to the aldolase class II family. MtnB subfamily. The cofactor is Zn(2+).

The protein localises to the cytoplasm. The enzyme catalyses 5-(methylsulfanyl)-D-ribulose 1-phosphate = 5-methylsulfanyl-2,3-dioxopentyl phosphate + H2O. Its pathway is amino-acid biosynthesis; L-methionine biosynthesis via salvage pathway; L-methionine from S-methyl-5-thio-alpha-D-ribose 1-phosphate: step 2/6. Catalyzes the dehydration of methylthioribulose-1-phosphate (MTRu-1-P) into 2,3-diketo-5-methylthiopentyl-1-phosphate (DK-MTP-1-P). The sequence is that of Methylthioribulose-1-phosphate dehydratase from Meyerozyma guilliermondii (strain ATCC 6260 / CBS 566 / DSM 6381 / JCM 1539 / NBRC 10279 / NRRL Y-324) (Yeast).